We begin with the raw amino-acid sequence, 585 residues long: ADP-ribosylation factor-binding protein GGA2 (585 aa).

The region spanning 33 to 169 (ACRMSLAEPD…LLKYKGYAFP (137 aa)) is the VHS domain. Glycyl lysine isopeptide (Lys-Gly) (interchain with G-Cter in ubiquitin) cross-links involve residues Lys-180 and Lys-287. A GAT domain is found at 196-321 (EIAQAAKLEE…LLEKFNLLKN (126 aa)). Residues 358–378 (LDEAPSQGNNNTNGTGTPAAA) are disordered. Positions 365 to 374 (GNNNTNGTGT) are enriched in low complexity. Residues 466-581 (TTTAPARTLV…TQAEETAVFT (116 aa)) enclose the GAE domain.

As to quaternary structure, binds to ARF1 and ARF2.

It is found in the golgi apparatus. Its subcellular location is the trans-Golgi network. In terms of biological role, may play a role in the regulation of membrane traffic through the trans-Golgi network. The polypeptide is ADP-ribosylation factor-binding protein GGA2 (GGA2) (Saccharomyces cerevisiae (strain ATCC 204508 / S288c) (Baker's yeast)).